Consider the following 506-residue polypeptide: Probable E3 ubiquitin-protein ligase ARI14 (506 aa).

The tract at residues 79 to 308 (PDSSSEISLE…VDSGFCIKTE (230 aa)) is TRIAD supradomain. The RING-type 1 zinc-finger motif lies at 83–140 (SEISLETDVYEFDGDNDLISMPFCSHKFDSKYWREYLEKNFYYVEKIQTTISCPDQDC). C106, H108, C135, C140, C180, C185, C207, C209, C214, C217, H222, C227, C258, C261, C277, C279, C284, C287, H294, and C304 together coordinate Zn(2+). The IBR-type zinc finger occupies 158–227 (EMYERYIWRS…RLESHRPVSC (70 aa)). The segment at 258 to 287 (CPHCLCSLESDTKMPQFLTCVCRLRFCSRC) adopts an RING-type 2; atypical zinc-finger fold. A RanBP2-type zinc finger spans residues 462–492 (GTGPFWYCDRCTYANTWEDNECEMCYDDSAS).

The protein belongs to the RBR family. Ariadne subfamily. Zn(2+) is required as a cofactor. Mostly expressed in closed flowers and, to a lower extent, in pollen.

It carries out the reaction [E2 ubiquitin-conjugating enzyme]-S-ubiquitinyl-L-cysteine + [acceptor protein]-L-lysine = [E2 ubiquitin-conjugating enzyme]-L-cysteine + [acceptor protein]-N(6)-ubiquitinyl-L-lysine.. The protein operates within protein modification; protein ubiquitination. Its function is as follows. Might act as an E3 ubiquitin-protein ligase, or as part of E3 complex, which accepts ubiquitin from specific E2 ubiquitin-conjugating enzymes and then transfers it to substrates. Negatively regulates male gametophyte formation and double fertilization. The sequence is that of Probable E3 ubiquitin-protein ligase ARI14 from Arabidopsis thaliana (Mouse-ear cress).